Reading from the N-terminus, the 161-residue chain is MPSFDVVCEPDMVELKNAIEQSNKEISNRFDFKGSDSRVEQKDEALILFGDDDFKLGQVRDVLVNKMAKRNVDVRYLKDDKTETIGGDKRKQTMKIQKGITSELSKKVVRIIKDSKIKVQASIQGDAVRVTGGKRDDLQETMALLKKEVTEAPLGFNNFRD.

This sequence belongs to the YajQ family.

Nucleotide-binding protein. This chain is Nucleotide-binding protein Pnuc_0290, found in Polynucleobacter asymbioticus (strain DSM 18221 / CIP 109841 / QLW-P1DMWA-1) (Polynucleobacter necessarius subsp. asymbioticus).